The sequence spans 90 residues: CRISPR-associated endonuclease Cas2 2 (90 aa).

Position 11 (aspartate 11) interacts with Mg(2+).

It belongs to the CRISPR-associated endoribonuclease Cas2 protein family. Homodimer, forms a heterotetramer with a Cas1 homodimer. The cofactor is Mn(2+). Mg(2+) serves as cofactor.

Inhibited by EDTA and at pH 6.0. In terms of biological role, CRISPR (clustered regularly interspaced short palindromic repeat), is an adaptive immune system that provides protection against mobile genetic elements (viruses, transposable elements and conjugative plasmids). CRISPR clusters contain sequences complementary to antecedent mobile elements and target invading nucleic acids. CRISPR clusters are transcribed and processed into CRISPR RNA (crRNA). Involved in the integration of spacer DNA into the CRISPR cassette. Functions as a dsDNA endonuclease and as a weak ssRNase. This Thermus thermophilus (strain ATCC BAA-163 / DSM 7039 / HB27) protein is CRISPR-associated endonuclease Cas2 2 (cas2b).